The following is a 399-amino-acid chain: Protein translocase subunit SecD (399 aa).

6 consecutive transmembrane segments (helical) span residues 7 to 27 (IKTA…LTFP), 239 to 259 (VIGA…LGLV), 262 to 282 (IALL…NATL), 286 to 306 (GVAG…LIFA), 329 to 351 (ALRA…FYFG), and 357 to 381 (GFAV…RTLL).

This sequence belongs to the SecD/SecF family. SecD subfamily. Forms a complex with SecF. Part of the essential Sec protein translocation apparatus which comprises SecA, SecYEG and auxiliary proteins SecDF. Other proteins may also be involved.

The protein localises to the cell inner membrane. In terms of biological role, part of the Sec protein translocase complex. Interacts with the SecYEG preprotein conducting channel. SecDF uses the proton motive force (PMF) to complete protein translocation after the ATP-dependent function of SecA. In Dictyoglomus turgidum (strain DSM 6724 / Z-1310), this protein is Protein translocase subunit SecD.